A 427-amino-acid chain; its full sequence is 3-phosphoshikimate 1-carboxyvinyltransferase (427 aa).

Lysine 23, serine 24, and arginine 28 together coordinate 3-phosphoshikimate. Lysine 23 contacts phosphoenolpyruvate. The phosphoenolpyruvate site is built by glycine 97 and arginine 125. Residues serine 170, serine 171, glutamine 172, serine 198, aspartate 314, asparagine 337, and lysine 341 each contribute to the 3-phosphoshikimate site. Glutamine 172 provides a ligand contact to phosphoenolpyruvate. Aspartate 314 (proton acceptor) is an active-site residue. Residues arginine 345, arginine 387, and lysine 412 each contribute to the phosphoenolpyruvate site.

Belongs to the EPSP synthase family. Monomer.

The protein localises to the cytoplasm. The catalysed reaction is 3-phosphoshikimate + phosphoenolpyruvate = 5-O-(1-carboxyvinyl)-3-phosphoshikimate + phosphate. It functions in the pathway metabolic intermediate biosynthesis; chorismate biosynthesis; chorismate from D-erythrose 4-phosphate and phosphoenolpyruvate: step 6/7. Functionally, catalyzes the transfer of the enolpyruvyl moiety of phosphoenolpyruvate (PEP) to the 5-hydroxyl of shikimate-3-phosphate (S3P) to produce enolpyruvyl shikimate-3-phosphate and inorganic phosphate. The polypeptide is 3-phosphoshikimate 1-carboxyvinyltransferase (Buchnera aphidicola subsp. Acyrthosiphon pisum (strain Tuc7)).